The sequence spans 215 residues: Pyrophosphatase PpaX (215 aa).

The active-site Nucleophile is D9.

This sequence belongs to the HAD-like hydrolase superfamily. PpaX family. The cofactor is Mg(2+).

The enzyme catalyses diphosphate + H2O = 2 phosphate + H(+). Functionally, hydrolyzes pyrophosphate formed during P-Ser-HPr dephosphorylation by HPrK/P. Might play a role in controlling the intracellular pyrophosphate pool. This chain is Pyrophosphatase PpaX, found in Bacillus mycoides (strain KBAB4) (Bacillus weihenstephanensis).